Here is a 447-residue protein sequence, read N- to C-terminus: Maintenance of mitochondrial morphology protein 1 (447 aa).

At M1–G109 the chain is on the lumenal side. A helical membrane pass occupies residues L110–F130. Topologically, residues S131–L447 are cytoplasmic. In terms of domain architecture, SMP-LTD spans S208 to P421.

This sequence belongs to the MMM1 family. In terms of assembly, homodimer. Component of the ER-mitochondria encounter structure (ERMES) or MDM complex, composed of MMM1, MDM10, MDM12 and MDM34. An MMM1 homodimer associates with one molecule of MDM12 on each side in a pairwise head-to-tail manner, and the SMP-LTD domains of MMM1 and MDM12 generate a continuous hydrophobic tunnel for phospholipid trafficking.

The protein resides in the endoplasmic reticulum membrane. Its function is as follows. Component of the ERMES/MDM complex, which serves as a molecular tether to connect the endoplasmic reticulum (ER) and mitochondria. Components of this complex are involved in the control of mitochondrial shape and protein biogenesis, and function in nonvesicular lipid trafficking between the ER and mitochondria. The MDM12-MMM1 subcomplex functions in the major beta-barrel assembly pathway that is responsible for biogenesis of all outer membrane beta-barrel proteins, and acts in a late step after the SAM complex. The MDM10-MDM12-MMM1 subcomplex further acts in the TOM40-specific pathway after the action of the MDM12-MMM1 complex. Essential for establishing and maintaining the structure of mitochondria and maintenance of mtDNA nucleoids. The chain is Maintenance of mitochondrial morphology protein 1 from Lachancea thermotolerans (strain ATCC 56472 / CBS 6340 / NRRL Y-8284) (Yeast).